Consider the following 175-residue polypeptide: Beta-carotene hydroxylase (175 aa).

Residues 11–136 (FVTVIGMEVI…RGKEGCVSFG (126 aa)) enclose the Fatty acid hydroxylase domain.

This sequence belongs to the sterol desaturase family.

It catalyses the reaction all-trans-beta-carotene + 4 reduced [2Fe-2S]-[ferredoxin] + 2 O2 + 4 H(+) = all-trans-zeaxanthin + 4 oxidized [2Fe-2S]-[ferredoxin] + 2 H2O. It functions in the pathway carotenoid biosynthesis; zeaxanthin biosynthesis. Catalyzes the hydroxylation reaction from beta-carotene to zeaxanthin. The polypeptide is Beta-carotene hydroxylase (crtZ) (Pantoea ananas (Erwinia uredovora)).